The following is a 294-amino-acid chain: N-acetylmuramic acid 6-phosphate etherase (294 aa).

Positions 54–217 constitute an SIS domain; that stretch reads TIHSFKSNGR…STASMIGVGK (164 aa). Glutamate 82 acts as the Proton donor in catalysis. Glutamate 113 is a catalytic residue.

It belongs to the GCKR-like family. MurNAc-6-P etherase subfamily. In terms of assembly, homodimer.

The enzyme catalyses N-acetyl-D-muramate 6-phosphate + H2O = N-acetyl-D-glucosamine 6-phosphate + (R)-lactate. The protein operates within amino-sugar metabolism; N-acetylmuramate degradation. Its function is as follows. Specifically catalyzes the cleavage of the D-lactyl ether substituent of MurNAc 6-phosphate, producing GlcNAc 6-phosphate and D-lactate. The sequence is that of N-acetylmuramic acid 6-phosphate etherase from Oceanobacillus iheyensis (strain DSM 14371 / CIP 107618 / JCM 11309 / KCTC 3954 / HTE831).